A 125-amino-acid chain; its full sequence is uncharacterized protein (125 aa).

One can recognise an HTH dtxR-type domain in the interval 1–63; it reads MSQSIEDYLE…YEPYIGITLT (63 aa).

This sequence belongs to the DtxR/MntR family.

This is an uncharacterized protein from Methanocaldococcus jannaschii (strain ATCC 43067 / DSM 2661 / JAL-1 / JCM 10045 / NBRC 100440) (Methanococcus jannaschii).